A 151-amino-acid polypeptide reads, in one-letter code: Transcriptional repressor NrdR (151 aa).

Residues 3 to 34 (CPFCNSVDTSVKNSRPSDCKMSVRRRRSCDSC) fold into a zinc finger. Residues 49-139 (VKVLKKDGSV…VYMNFSDVND (91 aa)) enclose the ATP-cone domain.

This sequence belongs to the NrdR family. Zn(2+) is required as a cofactor.

Functionally, negatively regulates transcription of bacterial ribonucleotide reductase nrd genes and operons by binding to NrdR-boxes. The chain is Transcriptional repressor NrdR from Anaplasma marginale (strain Florida).